Consider the following 38-residue polypeptide: Photosystem II reaction center protein L (38 aa).

A helical transmembrane segment spans residues 17–37 (SLYWGLLCIFVLAILFSSYFF).

Belongs to the PsbL family. As to quaternary structure, PSII is composed of 1 copy each of membrane proteins PsbA, PsbB, PsbC, PsbD, PsbE, PsbF, PsbH, PsbI, PsbJ, PsbK, PsbL, PsbM, PsbT, PsbX, PsbY, PsbZ, Psb30/Ycf12, at least 3 peripheral proteins of the oxygen-evolving complex and a large number of cofactors. It forms dimeric complexes.

The protein localises to the plastid. The protein resides in the chloroplast thylakoid membrane. Its function is as follows. One of the components of the core complex of photosystem II (PSII). PSII is a light-driven water:plastoquinone oxidoreductase that uses light energy to abstract electrons from H(2)O, generating O(2) and a proton gradient subsequently used for ATP formation. It consists of a core antenna complex that captures photons, and an electron transfer chain that converts photonic excitation into a charge separation. This subunit is found at the monomer-monomer interface and is required for correct PSII assembly and/or dimerization. The protein is Photosystem II reaction center protein L of Cyanidioschyzon merolae (strain NIES-3377 / 10D) (Unicellular red alga).